A 112-amino-acid polypeptide reads, in one-letter code: Carboxysome shell protein CcmK4 (112 aa).

The 87-residue stretch at 6 to 92 (AVGSIETIGF…PHENVVAVLP (87 aa)) folds into the BMC domain.

Belongs to the bacterial microcompartments protein family. CcmK subfamily. Homohexamer. Interacts with full-length CcmM. Forms mixed heterohexamers with CcmK3, probably with 1:5 CcmK3:CcmK4 stoichiometry. Only very weak interactions with CcmK1 and CcmK2 were seen.

The protein resides in the carboxysome. A probably minor shell protein component of the carboxysome, a polyhedral inclusion where RuBisCO (ribulose bisphosphate carboxylase, rbcL-rbcS) is sequestered. The central pore probably regulates metabolite flux, as might the gaps between assembled homohexamers. Homohexamers make sheets that probably form the facets of the polyhedral carboxysome. This subunit probably makes both homohexamers and heterohexamers with CcmK3. This is Carboxysome shell protein CcmK4 from Synechocystis sp. (strain ATCC 27184 / PCC 6803 / Kazusa).